A 354-amino-acid polypeptide reads, in one-letter code: UDP-3-O-acylglucosamine N-acyltransferase (354 aa).

H245 (proton acceptor) is an active-site residue.

This sequence belongs to the transferase hexapeptide repeat family. LpxD subfamily. Homotrimer.

The enzyme catalyses a UDP-3-O-[(3R)-3-hydroxyacyl]-alpha-D-glucosamine + a (3R)-hydroxyacyl-[ACP] = a UDP-2-N,3-O-bis[(3R)-3-hydroxyacyl]-alpha-D-glucosamine + holo-[ACP] + H(+). It functions in the pathway bacterial outer membrane biogenesis; LPS lipid A biosynthesis. Catalyzes the N-acylation of UDP-3-O-acylglucosamine using 3-hydroxyacyl-ACP as the acyl donor. Is involved in the biosynthesis of lipid A, a phosphorylated glycolipid that anchors the lipopolysaccharide to the outer membrane of the cell. The chain is UDP-3-O-acylglucosamine N-acyltransferase from Anaeromyxobacter sp. (strain K).